The primary structure comprises 224 residues: 2,5-diamino-6-ribosylamino-4(3H)-pyrimidinone 5'-phosphate reductase (224 aa).

Residues Thr-57, Asp-61, 82–85, Val-131, and 153–156 each bind NADP(+); these read STAN and GASI.

This sequence belongs to the HTP reductase family. Homodimer.

It catalyses the reaction 2,5-diamino-6-(1-D-ribitylamino)pyrimidin-4(3H)-one 5'-phosphate + NADP(+) = 2,5-diamino-6-(1-D-ribosylamino)pyrimidin-4(3H)-one 5'-phosphate + NADPH + H(+). It carries out the reaction 2,5-diamino-6-(1-D-ribitylamino)pyrimidin-4(3H)-one 5'-phosphate + NAD(+) = 2,5-diamino-6-(1-D-ribosylamino)pyrimidin-4(3H)-one 5'-phosphate + NADH + H(+). It functions in the pathway cofactor biosynthesis; riboflavin biosynthesis. In terms of biological role, catalyzes an early step in riboflavin biosynthesis, the NADPH-dependent reduction of the ribose side chain of 2,5-diamino-6-ribosylamino-4(3H)-pyrimidinone 5'-phosphate, yielding 2,5-diamino-6-ribitylamino-4(3H)-pyrimidinone 5'-phosphate. The chain is 2,5-diamino-6-ribosylamino-4(3H)-pyrimidinone 5'-phosphate reductase (ribD2) from Aquifex aeolicus (strain VF5).